We begin with the raw amino-acid sequence, 827 residues long: Glycerol-3-phosphate acyltransferase (827 aa).

Positions 325–330 (CHRSHM) match the HXXXXD motif motif.

The protein belongs to the GPAT/DAPAT family.

The protein resides in the cell inner membrane. It catalyses the reaction sn-glycerol 3-phosphate + an acyl-CoA = a 1-acyl-sn-glycero-3-phosphate + CoA. It functions in the pathway phospholipid metabolism; CDP-diacylglycerol biosynthesis; CDP-diacylglycerol from sn-glycerol 3-phosphate: step 1/3. In Shigella sonnei (strain Ss046), this protein is Glycerol-3-phosphate acyltransferase.